A 204-amino-acid chain; its full sequence is Imidazoleglycerol-phosphate dehydratase (204 aa).

It belongs to the imidazoleglycerol-phosphate dehydratase family.

It is found in the cytoplasm. The enzyme catalyses D-erythro-1-(imidazol-4-yl)glycerol 3-phosphate = 3-(imidazol-4-yl)-2-oxopropyl phosphate + H2O. It functions in the pathway amino-acid biosynthesis; L-histidine biosynthesis; L-histidine from 5-phospho-alpha-D-ribose 1-diphosphate: step 6/9. The polypeptide is Imidazoleglycerol-phosphate dehydratase (Corynebacterium urealyticum (strain ATCC 43042 / DSM 7109)).